The following is a 1185-amino-acid chain: Chromosome partition protein Smc (1185 aa).

32–39 (PNGSGKSN) contributes to the ATP binding site. Positions 228–503 (SRLVKKLTIA…LQAVQERYTN (276 aa)) form a coiled coil. The tract at residues 300–323 (TQGQQGVDAERRQNQQSEQERLTA) is disordered. The segment covering 307-320 (DAERRQNQQSEQER) has biased composition (basic and acidic residues). The SMC hinge domain maps to 519–637 (SGVAGAVSEL…VDTLDHAMAI (119 aa)). Coiled coils occupy residues 675-928 (QQQQ…RRLE) and 989-1025 (AIDE…ADLD).

Belongs to the SMC family. In terms of assembly, homodimer.

It localises to the cytoplasm. In terms of biological role, required for chromosome condensation and partitioning. This chain is Chromosome partition protein Smc, found in Lactiplantibacillus plantarum (strain ATCC BAA-793 / NCIMB 8826 / WCFS1) (Lactobacillus plantarum).